A 102-amino-acid chain; its full sequence is Glutaredoxin-C13 (102 aa).

Positions 1–101 (MDKVMRMSSE…PLIKPYQSIL (101 aa)) constitute a Glutaredoxin domain. Cys21 and Cys24 form a disulfide bridge.

It belongs to the glutaredoxin family. CC-type subfamily.

It localises to the cytoplasm. Its function is as follows. Has a glutathione-disulfide oxidoreductase activity in the presence of NADPH and glutathione reductase. Reduces low molecular weight disulfides and proteins. This is Glutaredoxin-C13 (GRXC13) from Arabidopsis thaliana (Mouse-ear cress).